The sequence spans 300 residues: HTH-type transcriptional regulator ArgP (300 aa).

In terms of domain architecture, HTH lysR-type spans 4–60 (FDYKLLAALAAVVEQGGFERAAQALGLSQSAVSQRIKLLEARVGQPVLVRETPPHPT). Positions 21-40 (FERAAQALGLSQSAVSQRIK) form a DNA-binding region, H-T-H motif.

The protein belongs to the LysR transcriptional regulatory family. In terms of assembly, homodimer.

Functionally, controls the transcription of genes involved in arginine and lysine metabolism. In Pseudomonas aeruginosa (strain UCBPP-PA14), this protein is HTH-type transcriptional regulator ArgP.